The chain runs to 992 residues: Meckelin (992 aa).

The first 35 residues, 1-35, serve as a signal peptide directing secretion; it reads MVMRTRPLAAMAVRSCFSALTGTVYLLLVLCEVSW. Topologically, residues 36 to 516 are extracellular; that stretch reads AQIFSFPFQR…SVKYEMNQGD (481 aa). Residues 37–280 form a cysteine-rich region; it reads QIFSFPFQRP…FHYVFEGAAG (244 aa). 12 disulfides stabilise this stretch: C49/C62, C65/C78, C80/C97, C100/C114, C117/C127, C129/C150, C153/C170, C173/C184, C186/C197, C237/C246, C253/C268, and C354/C375. The N-linked (GlcNAc...) asparagine glycan is linked to N242. The chain crosses the membrane as a helical span at residues 517–545; that stretch reads AFVQTDIALGVLGGLAVLSSLLKTAGWKR. At 546–555 the chain is on the cytoplasmic side; it reads RIGSPMIDLQ. Residues 556-587 form a helical membrane-spanning segment; the sequence is TVMKFLLYYAGDLANVFFIITVGTGLYWLIFF. At 588-600 the chain is on the extracellular side; the sequence is KAQKSVSVLLPMP. A helical transmembrane segment spans residues 601 to 628; the sequence is VQEERFVTYVGCAFAMKALQFLHKLISQ. At 629-667 the chain is on the cytoplasmic side; the sequence is ITIDIFFIDWERPKGKVLKAVEGEGGVRSATVPVSIWRT. An intramembrane region (helical) is located at residues 668–676; the sequence is YFVANEWNE. A discontinuously helical transmembrane segment spans residues 668-698; it reads YFVANEWNEIQTVRKINPLFQVLTTLFFLEV. An intramembrane segment occupies 677–685; it reads IQTVRKINP. The helical intramembrane region spans 686 to 698; that stretch reads LFQVLTTLFFLEV. At 699–728 the chain is on the extracellular side; sequence VGFKNLALMDPSSSLSRSLSDYAAPYSRIL. Residues 729-754 constitute an intramembrane region (helical); that stretch reads RYAVATTIWLVIGIVQVVFFAAFYER. Residues 729-768 traverse the membrane as a discontinuously helical segment; that stretch reads RYAVATTIWLVIGIVQVVFFAAFYERFIEDKIRQFVDLCS. Residues 755-759 lie within the membrane without spanning it; that stretch reads FIEDK. Positions 760–768 form an intramembrane region, helical; it reads IRQFVDLCS. Residues 769–923 lie on the Cytoplasmic side of the membrane; the sequence is MSNVSVFLLS…SIFYNDESHS (155 aa). The helical intramembrane region spans 924–926; it reads FSS. A discontinuously helical membrane pass occupies residues 924 to 949; the sequence is FSSVLYYGNEATLLIFDLLFFCVVDL. An intramembrane segment occupies 927-933; sequence VLYYGNE. Residues 934 to 949 constitute an intramembrane region (helical); sequence ATLLIFDLLFFCVVDL. Residues 950–954 lie on the Extracellular side of the membrane; it reads ACQNF. Residues 955-982 form a helical membrane-spanning segment; sequence VLASFLTYLQQEIFRFIRNTVGQKNLAT. Residues 983-992 are Cytoplasmic-facing; that stretch reads KTLVDERFLI.

Homodimer. Part of the tectonic-like complex (also named B9 complex). Interacts with DNAJB9, DNAJC10 and mutated SFTPC. Interacts with SYNE2 during the early establishment of cell polarity. Interacts (via C-terminus) with FLNA. Interacts with TMEM218. Interacts with WNT5A. Interacts with ROR2.

The protein localises to the cell membrane. The protein resides in the endoplasmic reticulum membrane. It localises to the cytoplasm. It is found in the cytoskeleton. Its subcellular location is the cilium basal body. Part of the tectonic-like complex which is required for tissue-specific ciliogenesis and may regulate ciliary membrane composition. Involved in centrosome migration to the apical cell surface during early ciliogenesis. Required for ciliary structure and function, including a role in regulating length and appropriate number through modulating centrosome duplication. Is a key regulator of stereociliary bundle orientation. Required for epithelial cell branching morphology. Essential for endoplasmic reticulum-associated degradation (ERAD) of surfactant protein C (sftpc). Involved in the negative regulation of canonical Wnt signaling, and activation of the non-canonical cascade stimulated by WNT5A. In non-canonical Wnt signaling, it may act as ROR2 coreceptor. The chain is Meckelin (Tmem67) from Rattus norvegicus (Rat).